Consider the following 990-residue polypeptide: Aconitate hydratase 3, mitochondrial (990 aa).

A mitochondrion-targeting transit peptide spans 1–78 (MYLTASSSAS…PFRFTSQIRA (78 aa)). At Ser-91 the chain carries Phosphoserine. Substrate is bound by residues Gln-182 and 301 to 303 (DSH). 3 residues coordinate [4Fe-4S] cluster: Cys-533, Cys-599, and Cys-602. Residues Arg-632, Arg-637, Arg-795, and 876–877 (SR) each bind substrate.

It belongs to the aconitase/IPM isomerase family. As to quaternary structure, monomer. Interacts with B'GAMMA in the cytosol. [4Fe-4S] cluster is required as a cofactor. Phosphorylated at Ser-91 in the cytoplasm; this phosphorylation requires the presence of B'GAMMA. As to expression, major aconitase isoenzyme in young seedlings. Expressed in roots, leaves, stems and flowers, and, at low levels, in seeds.

The protein localises to the mitochondrion. The protein resides in the cytoplasm. It catalyses the reaction citrate = D-threo-isocitrate. It functions in the pathway carbohydrate metabolism; tricarboxylic acid cycle; isocitrate from oxaloacetate: step 2/2. In terms of biological role, catalyzes the isomerization of citrate to isocitrate via cis-aconitate. Contributes to oxidative stress tolerance. Modulates cytosolic citrate metabolism during lipid mobilization. Required during seedling growth. This Arabidopsis thaliana (Mouse-ear cress) protein is Aconitate hydratase 3, mitochondrial.